The chain runs to 502 residues: Hexokinase-2 (502 aa).

Residues 4–24 form a helical membrane-spanning segment; sequence VAVATTVVCSVAVCAAAALIV. One can recognise a Hexokinase domain in the interval 35–487; sequence ARVIEILKAF…SGVGAALLAA (453 aa). The interval 90–228 is hexokinase small subdomain; that stretch reads SGDETGFFYA…GLDMLVAALV (139 aa). The ADP site is built by Gly104, Thr105, and Asn106. Thr194, Lys195, Asn229, and Asp230 together coordinate D-glucose. The tract at residues 229–476 is hexokinase large subdomain; the sequence is NDTIGTLAGG…ESVEVILSND (248 aa). Residue Thr253 participates in ADP binding. D-glucose is bound by residues Asn256, Glu284, and Glu315. Gly441 contacts ADP.

This sequence belongs to the hexokinase family. In terms of tissue distribution, highly expressed in siliques, at intermediate levels in roots and flowers, and at lower levels in stems, rosette and cauline leaves.

Its subcellular location is the mitochondrion outer membrane. It catalyses the reaction a D-hexose + ATP = a D-hexose 6-phosphate + ADP + H(+). The catalysed reaction is D-fructose + ATP = D-fructose 6-phosphate + ADP + H(+). The enzyme catalyses D-glucose + ATP = D-glucose 6-phosphate + ADP + H(+). Its pathway is carbohydrate metabolism; hexose metabolism. The protein operates within carbohydrate degradation; glycolysis; D-glyceraldehyde 3-phosphate and glycerone phosphate from D-glucose: step 1/4. In terms of biological role, fructose and glucose phosphorylating enzyme. May be involved in the phosphorylation of glucose during the export from mitochondrion to cytosol. Acts as a sugar sensor which may regulate sugar-dependent gene repression or activation. Mediates the effects of sugar on plant growth and development independently of its catalytic activity or the sugar metabolism. May regulate the execution of program cell death in plant cells. The sequence is that of Hexokinase-2 (HXK2) from Arabidopsis thaliana (Mouse-ear cress).